The sequence spans 338 residues: tRNA N6-adenosine threonylcarbamoyltransferase (338 aa).

The Fe cation site is built by His-111 and His-115. Substrate is bound by residues 134–138, Asp-167, Gly-180, and Asn-272; that span reads LVSGG. Asp-300 lines the Fe cation pocket.

Belongs to the KAE1 / TsaD family. The cofactor is Fe(2+).

Its subcellular location is the cytoplasm. It catalyses the reaction L-threonylcarbamoyladenylate + adenosine(37) in tRNA = N(6)-L-threonylcarbamoyladenosine(37) in tRNA + AMP + H(+). Its function is as follows. Required for the formation of a threonylcarbamoyl group on adenosine at position 37 (t(6)A37) in tRNAs that read codons beginning with adenine. Is involved in the transfer of the threonylcarbamoyl moiety of threonylcarbamoyl-AMP (TC-AMP) to the N6 group of A37, together with TsaE and TsaB. TsaD likely plays a direct catalytic role in this reaction. The sequence is that of tRNA N6-adenosine threonylcarbamoyltransferase from Shewanella oneidensis (strain ATCC 700550 / JCM 31522 / CIP 106686 / LMG 19005 / NCIMB 14063 / MR-1).